Consider the following 166-residue polypeptide: Large ribosomal subunit protein bL17 (166 aa).

Residues 122-166 (PESAPVKAKQDRSKRVRGSKKTQEGSEKAEVSASAGEAAAVTEEK) form a disordered region. Positions 142-151 (KTQEGSEKAE) are enriched in basic and acidic residues. The span at 152–166 (VSASAGEAAAVTEEK) shows a compositional bias: low complexity.

Belongs to the bacterial ribosomal protein bL17 family. As to quaternary structure, part of the 50S ribosomal subunit. Contacts protein L32.

The protein is Large ribosomal subunit protein bL17 of Chlorobium phaeobacteroides (strain BS1).